The primary structure comprises 443 residues: ATP-dependent protease ATPase subunit HslU (443 aa).

Residues isoleucine 18 and 60-65 (GVGKTE) contribute to the ATP site. Residues 141-165 (DQWGQNEENDTDSSTRQSFRKKLRE) form a disordered region. ATP contacts are provided by aspartate 256, glutamate 321, and arginine 393.

The protein belongs to the ClpX chaperone family. HslU subfamily. As to quaternary structure, a double ring-shaped homohexamer of HslV is capped on each side by a ring-shaped HslU homohexamer. The assembly of the HslU/HslV complex is dependent on binding of ATP.

The protein resides in the cytoplasm. Its function is as follows. ATPase subunit of a proteasome-like degradation complex; this subunit has chaperone activity. The binding of ATP and its subsequent hydrolysis by HslU are essential for unfolding of protein substrates subsequently hydrolyzed by HslV. HslU recognizes the N-terminal part of its protein substrates and unfolds these before they are guided to HslV for hydrolysis. This is ATP-dependent protease ATPase subunit HslU from Photobacterium profundum (strain SS9).